Here is a 127-residue protein sequence, read N- to C-terminus: MADIEELAEQLVGLTIQEANELANHLEEEYDIQPASAGVAVAADGGGGADGDAEEEEQTAFDVVLTGIGGNKIQVIKEVRSITGMGLKEAKSLVDEAPNPVSEGVSREEADDLKAQIEDAGGEVELQ.

The tract at residues 93 to 127 (LVDEAPNPVSEGVSREEADDLKAQIEDAGGEVELQ) is disordered. Residues 105 to 117 (VSREEADDLKAQI) show a composition bias toward basic and acidic residues.

This sequence belongs to the bacterial ribosomal protein bL12 family. In terms of assembly, homodimer. Part of the ribosomal stalk of the 50S ribosomal subunit. Forms a multimeric L10(L12)X complex, where L10 forms an elongated spine to which 2 to 4 L12 dimers bind in a sequential fashion. Binds GTP-bound translation factors.

In terms of biological role, forms part of the ribosomal stalk which helps the ribosome interact with GTP-bound translation factors. Is thus essential for accurate translation. This Salinibacter ruber (strain DSM 13855 / M31) protein is Large ribosomal subunit protein bL12.